Here is an 87-residue protein sequence, read N- to C-terminus: Homeotic protein ultrabithorax (87 aa).

The Antp-type hexapeptide signature appears at 22-27; sequence FYPWMA.

The protein belongs to the Antp homeobox family. In the embryo, expression is seen in the epidermis, somatic and visceral mesoderm, and the peripheral and central nervous system.

Its subcellular location is the nucleus. Functionally, sequence-specific transcription factor which is part of a developmental regulatory system that provides cells with specific positional identities on the anterior-posterior axis. Binds the consensus region 5'-TTAAT[GT][GA]-3'. This homeotic protein controls development of the cells in the posterior thoracic and first abdominal segments. It activates the synthesis of the decapentaplegic (DPP) growth factor. This chain is Homeotic protein ultrabithorax (Ubx), found in Drosophila virilis (Fruit fly).